We begin with the raw amino-acid sequence, 353 residues long: Photosystem II D2 protein (353 aa).

Residue Thr-2 is modified to N-acetylthreonine. Thr-2 bears the Phosphothreonine mark. Residues 41-61 (CAYFALGGWFTGTTFVTSWYT) traverse the membrane as a helical segment. His-118 is a binding site for chlorophyll a. A helical membrane pass occupies residues 125-141 (GFMLRQFELARSVQLRP). Pheophytin a is bound by residues Gln-130 and Asn-143. The helical transmembrane segment at 153 to 166 (VFVSVFLIYPLGQS) threads the bilayer. Position 198 (His-198) interacts with chlorophyll a. Residues 208 to 228 (AALLCAIHGATVENTLFEDGD) traverse the membrane as a helical segment. A plastoquinone contacts are provided by His-215 and Phe-262. His-215 provides a ligand contact to Fe cation. His-269 contacts Fe cation. A helical transmembrane segment spans residues 279 to 295 (GLWMSALGVVGLALNLR).

It belongs to the reaction center PufL/M/PsbA/D family. In terms of assembly, PSII is composed of 1 copy each of membrane proteins PsbA, PsbB, PsbC, PsbD, PsbE, PsbF, PsbH, PsbI, PsbJ, PsbK, PsbL, PsbM, PsbT, PsbX, PsbY, PsbZ, Psb30/Ycf12, at least 3 peripheral proteins of the oxygen-evolving complex and a large number of cofactors. It forms dimeric complexes. Interacts with PAM68. The cofactor is The D1/D2 heterodimer binds P680, chlorophylls that are the primary electron donor of PSII, and subsequent electron acceptors. It shares a non-heme iron and each subunit binds pheophytin, quinone, additional chlorophylls, carotenoids and lipids. There is also a Cl(-1) ion associated with D1 and D2, which is required for oxygen evolution. The PSII complex binds additional chlorophylls, carotenoids and specific lipids.. Post-translationally, phosphorylation occurs in normal plant growth light conditions. Rapid dephosphorylation occurs during heat shock.

The protein localises to the plastid. It is found in the chloroplast thylakoid membrane. It carries out the reaction 2 a plastoquinone + 4 hnu + 2 H2O = 2 a plastoquinol + O2. In terms of biological role, photosystem II (PSII) is a light-driven water:plastoquinone oxidoreductase that uses light energy to abstract electrons from H(2)O, generating O(2) and a proton gradient subsequently used for ATP formation. It consists of a core antenna complex that captures photons, and an electron transfer chain that converts photonic excitation into a charge separation. The D1/D2 (PsbA/PsbD) reaction center heterodimer binds P680, the primary electron donor of PSII as well as several subsequent electron acceptors. D2 is needed for assembly of a stable PSII complex. The protein is Photosystem II D2 protein of Arabidopsis thaliana (Mouse-ear cress).